Here is a 90-residue protein sequence, read N- to C-terminus: MACPLDQAIGLLVAIFHKYSGQEGDKNTLSKSELKELIQKELTIGAKLQDAEIAKLMDDLDRNKDQVVNFQEYVTFLGALAMIYNDVLRG.

EF-hand domains lie at 12–47 and 48–83; these read LVAI…IGAK and LQDA…LAMI. Ca(2+)-binding residues include Thr28 and Glu33. Lys40 carries the post-translational modification N6-acetyllysine. Lys47 is modified (N6-acetyllysine; alternate). N6-succinyllysine; alternate is present on Lys47. Ca(2+) is bound by residues Asp61, Asn63, Asp65, and Glu72.

This sequence belongs to the S-100 family. Homodimer; head to tail assembly of 2 subunits. Interacts with CACYBP in a calcium-dependent manner. Interacts with ANXA2 and ANXA11 (via N-terminus). Interacts with SUGT1. Interacts with TP53; has higher affinity for TP53 that is phosphorylated on its N-terminal domain, and lower affinity for TP53 that is phosphorylated on its C-terminal domain. Interacts with tropomyosin. Interacts with FKBP4. Interacts with PPP5C (via TPR repeats); the interaction is calcium-dependent and modulates PPP5C activity. Interacts with TPPP; this interaction inhibits TPPP dimerization.

Its subcellular location is the nucleus envelope. It is found in the cytoplasm. The protein localises to the cell membrane. Its function is as follows. May function as calcium sensor and modulator, contributing to cellular calcium signaling. May function by interacting with other proteins, such as TPR-containing proteins, and indirectly play a role in many physiological processes such as the reorganization of the actin cytoskeleton and in cell motility. Binds 2 calcium ions. Calcium binding is cooperative. In Sus scrofa (Pig), this protein is Protein S100-A6 (S100A6).